We begin with the raw amino-acid sequence, 256 residues long: Trypsinogen-like protein 3 (256 aa).

An N-terminal signal peptide occupies residues 1 to 14 (MILLLVLALGLAGA). A Peptidase S1 domain is found at 15-237 (SPLGEYKECP…YNDWIHQVMA (223 aa)). Intrachain disulfides connect cysteine 23–cysteine 153, cysteine 41–cysteine 57, cysteine 125–cysteine 226, cysteine 132–cysteine 199, cysteine 164–cysteine 180, and cysteine 189–cysteine 213.

The protein belongs to the peptidase S1 family.

This chain is Trypsinogen-like protein 3 (trp3), found in Pseudopleuronectes americanus (Winter flounder).